The sequence spans 39 residues: Photosystem II reaction center protein L (39 aa).

The chain crosses the membrane as a helical span at residues S18–F38.

Belongs to the PsbL family. PSII is composed of 1 copy each of membrane proteins PsbA, PsbB, PsbC, PsbD, PsbE, PsbF, PsbH, PsbI, PsbJ, PsbK, PsbL, PsbM, PsbT, PsbX, PsbY, PsbZ, Psb30/Ycf12, at least 3 peripheral proteins of the oxygen-evolving complex and a large number of cofactors. It forms dimeric complexes.

It localises to the plastid thylakoid membrane. One of the components of the core complex of photosystem II (PSII). PSII is a light-driven water:plastoquinone oxidoreductase that uses light energy to abstract electrons from H(2)O, generating O(2) and a proton gradient subsequently used for ATP formation. It consists of a core antenna complex that captures photons, and an electron transfer chain that converts photonic excitation into a charge separation. This subunit is found at the monomer-monomer interface and is required for correct PSII assembly and/or dimerization. The chain is Photosystem II reaction center protein L from Cuscuta gronovii (Common dodder).